The chain runs to 592 residues: Dictomallein-1 (592 aa).

The signal sequence occupies residues 1-19 (MKILIILLVFLNLITNINC). Positions 140–402 (PNIGHETNLN…QNYFKDSIIY (263 aa)) constitute a Peptidase M66 domain. H294 is a Zn(2+) binding site. The active site involves E295. Zn(2+) is bound by residues H298 and H304.

This sequence belongs to the dictomallein family. Zn(2+) serves as cofactor.

The protein resides in the secreted. The polypeptide is Dictomallein-1 (dtmlA) (Dictyostelium discoideum (Social amoeba)).